The following is a 207-amino-acid chain: dTTP/UTP pyrophosphatase (207 aa).

The active-site Proton acceptor is the D87.

The protein belongs to the Maf family. YhdE subfamily. A divalent metal cation is required as a cofactor.

It localises to the cytoplasm. It carries out the reaction dTTP + H2O = dTMP + diphosphate + H(+). The catalysed reaction is UTP + H2O = UMP + diphosphate + H(+). Its function is as follows. Nucleoside triphosphate pyrophosphatase that hydrolyzes dTTP and UTP. May have a dual role in cell division arrest and in preventing the incorporation of modified nucleotides into cellular nucleic acids. This chain is dTTP/UTP pyrophosphatase, found in Nitrosomonas europaea (strain ATCC 19718 / CIP 103999 / KCTC 2705 / NBRC 14298).